Consider the following 1432-residue polypeptide: Probable ATP-dependent RNA helicase spindle-E (1432 aa).

In terms of domain architecture, Helicase ATP-binding spans 124 to 291 (LAAINAHPVV…FTTTNSVPPV (168 aa)). An ATP-binding site is contributed by 137 to 144 (GQTGCGKT). The short motif at 237–240 (DEVH) is the DEAH box element. Positions 337–524 (KIIMVIDNME…NSVLRAKELE (188 aa)) constitute a Helicase C-terminal domain. The region spanning 936–999 (AGAITKGMMV…RLMPKELIQQ (64 aa)) is the Tudor domain.

It belongs to the DEAD box helicase family. DEAH subfamily.

It localises to the cytoplasm. It catalyses the reaction ATP + H2O = ADP + phosphate + H(+). Functionally, probable ATP-binding RNA helicase which plays a central role during spermatogenesis and oogenesis by repressing transposable elements and preventing their mobilization, which is essential for the germline integrity. Acts via the piRNA metabolic process, which mediates the repression of transposable elements during meiosis by forming complexes composed of piRNAs and Piwi and govern the methylation and subsequent repression of transposons. Involved in the repression of LTR retrotransposon copia. Also involved in telomere regulation by repressing specialized telomeric retroelements HeT-A, TAHRE, and TART; Drosophila telomeres being maintained by transposition of specialized telomeric retroelements. Involved in telomeric trans-silencing, a repression mechanism by which a transposon or a transgene inserted in subtelomeric heterochromatin has the capacity to repress in trans in the female germline, a homologous transposon, or transgene located in euchromatin. Involved in the repression of testis-expressed Stellate genes by the homologous Su(Ste) repeats. Required for anteroposterior and dorsoventral axis formation during oogenesis. The sequence is that of Probable ATP-dependent RNA helicase spindle-E (spn-E) from Drosophila erecta (Fruit fly).